The following is a 528-amino-acid chain: U6 snRNA (guanine-N(2))-methyltransferase THUMPD2 (528 aa).

Over residues 154 to 168 the composition is skewed to basic and acidic residues; the sequence is QEVAKDHGESQEDKL. Disordered regions lie at residues 154 to 200 and 437 to 460; these read QEVA…ADAQ and MKTL…RASS. One can recognise a THUMP domain in the interval 162 to 266; the sequence is ESQEDKLLQG…DAYSVVGIPL (105 aa).

Belongs to the methyltransferase superfamily. Part of the heterodimeric THUMPD2-TRM112 methyltransferase complex; this complex forms an active tRNA methyltransferase, where TRMT112 acts as an activator of the catalytic subunit THUMPD2.

It is found in the nucleus. It carries out the reaction guanosine in U6 snRNA + S-adenosyl-L-methionine = N(2)-methylguanosine in U6 snRNA + S-adenosyl-L-homocysteine + H(+). Catalytic subunit of the THUMPD2-TRM112 methyltransferase complex, that specifically mediates the S-adenosyl-L-methionine-dependent N(2)-methylation of guanosine nucleotides, most probably at position 72 (m2G72), in the U6snRNA of the major spliceosome. This modification in the U6 snRNA affects the constitutive splicing efficiency of introns that have suboptimal splice sites and can impact final mRNA levels. The polypeptide is U6 snRNA (guanine-N(2))-methyltransferase THUMPD2 (Mus musculus (Mouse)).